A 214-amino-acid chain; its full sequence is Probable nicotinate-nucleotide adenylyltransferase (214 aa).

The protein belongs to the NadD family.

It catalyses the reaction nicotinate beta-D-ribonucleotide + ATP + H(+) = deamido-NAD(+) + diphosphate. It functions in the pathway cofactor biosynthesis; NAD(+) biosynthesis; deamido-NAD(+) from nicotinate D-ribonucleotide: step 1/1. Its function is as follows. Catalyzes the reversible adenylation of nicotinate mononucleotide (NaMN) to nicotinic acid adenine dinucleotide (NaAD). The sequence is that of Probable nicotinate-nucleotide adenylyltransferase from Buchnera aphidicola subsp. Acyrthosiphon pisum (strain Tuc7).